The following is a 486-amino-acid chain: Cardiolipin synthase A (486 aa).

2 consecutive transmembrane segments (helical) span residues 3–23 (TFYT…IAGV) and 38–58 (MAWL…YLSV). 2 consecutive PLD phosphodiesterase domains span residues 219-246 (MDLR…VDPR) and 399-426 (EGGL…DMRS). Catalysis depends on residues His-224, Lys-226, Asp-231, His-404, Lys-406, and Asp-411.

This sequence belongs to the phospholipase D family. Cardiolipin synthase subfamily. ClsA sub-subfamily.

Its subcellular location is the cell inner membrane. It catalyses the reaction 2 a 1,2-diacyl-sn-glycero-3-phospho-(1'-sn-glycerol) = a cardiolipin + glycerol. In terms of biological role, catalyzes the reversible phosphatidyl group transfer from one phosphatidylglycerol molecule to another to form cardiolipin (CL) (diphosphatidylglycerol) and glycerol. The chain is Cardiolipin synthase A from Salmonella gallinarum (strain 287/91 / NCTC 13346).